A 32-amino-acid polypeptide reads, in one-letter code: Fibrinolytic enzyme 2 (32 aa).

The region spanning 1 to 32 is the Peptidase S8 domain; sequence ISGTSMSCPHVAGRAYVLDTSLRVYLLDTGLR. Serine 5 functions as the Charge relay system in the catalytic mechanism.

It belongs to the peptidase S8 family.

Its activity is regulated as follows. Inhibited by PMSF. Not inhibited by benzamidine, aprotinin, SBTI, EDTA, EGTA, 2-mercaptoethanol, iodoacetic acid or pepstatin A. In terms of biological role, serine protease. Has fibrinolytic and fibrinogenolytic but no plasminogenolytic activity. Cleaves after Arg and Lys residues. Cleaves fibrinogen alpha chain, beta chain and gamma chain in that order. The protein is Fibrinolytic enzyme 2 of Hediste japonica (Polychaete worm).